Reading from the N-terminus, the 76-residue chain is Exodeoxyribonuclease 7 small subunit (76 aa).

The protein belongs to the XseB family. In terms of assembly, heterooligomer composed of large and small subunits.

The protein resides in the cytoplasm. It catalyses the reaction Exonucleolytic cleavage in either 5'- to 3'- or 3'- to 5'-direction to yield nucleoside 5'-phosphates.. Bidirectionally degrades single-stranded DNA into large acid-insoluble oligonucleotides, which are then degraded further into small acid-soluble oligonucleotides. This chain is Exodeoxyribonuclease 7 small subunit, found in Latilactobacillus sakei subsp. sakei (strain 23K) (Lactobacillus sakei subsp. sakei).